The following is a 310-amino-acid chain: Probable deoxyhypusine synthase (310 aa).

Lys-284 serves as the catalytic Nucleophile.

It belongs to the deoxyhypusine synthase family. Requires NAD(+) as cofactor.

The enzyme catalyses [eIF5A protein]-L-lysine + spermidine = [eIF5A protein]-deoxyhypusine + propane-1,3-diamine. The protein operates within protein modification; eIF5A hypusination. Its function is as follows. Catalyzes the NAD-dependent oxidative cleavage of spermidine and the subsequent transfer of the butylamine moiety of spermidine to the epsilon-amino group of a specific lysine residue of the eIF-5A precursor protein to form the intermediate deoxyhypusine residue. In Thermoplasma acidophilum (strain ATCC 25905 / DSM 1728 / JCM 9062 / NBRC 15155 / AMRC-C165), this protein is Probable deoxyhypusine synthase (dys).